Consider the following 229-residue polypeptide: MIKPVPVITIDGPSGSGKGTVAALLAGKLGWNFLDSGALYRLLAFAARNHGVDLTNEEALKVLAEHLDVQFGAARDGHGMVIILEGEDVTEAIRNETVGAGASQVAALPVVRTALLQRQKAFREAPGLVADGRDMGTVVFPDAPLKIFLTASAEERARRRYLQLKARGDDVNLASLLEEIRERDERDTQRAVAPLKPAEDAIQLDSTTLSIEEVLQRILSEVADRDLAG.

12–20 (GPSGSGKGT) lines the ATP pocket.

It belongs to the cytidylate kinase family. Type 1 subfamily.

It localises to the cytoplasm. The enzyme catalyses CMP + ATP = CDP + ADP. The catalysed reaction is dCMP + ATP = dCDP + ADP. The sequence is that of Cytidylate kinase from Stutzerimonas stutzeri (strain A1501) (Pseudomonas stutzeri).